The following is a 57-amino-acid chain: Potassium channel toxin KTx1 (57 aa).

Residues 1 to 13 (FLVLLLVSLMCYA) form the signal peptide. A propeptide spanning residues 14 to 18 (EIAEG) is cleaved from the precursor. 3 disulfide bridges follow: Cys24/Cys37, Cys30/Cys42, and Cys36/Cys51.

It belongs to the scorpion calcin-like family. KTX subfamily. As to expression, expressed by the venom gland.

The protein localises to the secreted. This recombinant peptide inhibits voltage-gated potassium channels mKv1.3/KCNA3 (IC(50)=1.70 uM), mKv1.1/KCNA1 (10 uM inhibits 40% of currents) and hKv1.2/KCNA2 (10 uM inhibits 42% of currents). May also increase intracellular calcium release through the activation of nuclear inositol 1,4,5-trisphosphate receptors (ITPR) of cardiomyocytes, thereby causing an increase in the contraction frequency of these cells. In Isometrus maculatus (Lesser brown scorpion), this protein is Potassium channel toxin KTx1.